The following is a 122-amino-acid chain: Sarcocystatin-A (122 aa).

Positions 1 to 20 (MKYVLILCVITLATVAYAQP) are cleaved as a signal peptide. Residue Gln-21 is modified to Pyrrolidone carboxylic acid. Positions 67–71 (QVVSG) match the Secondary area of contact motif.

Belongs to the cystatin family.

Functionally, selectively inhibits the activity of cysteine proteinase of hemocytes, protecting developing adult tissue in pupae from attack by the proteinase. The sequence is that of Sarcocystatin-A from Sarcophaga peregrina (Flesh fly).